Reading from the N-terminus, the 222-residue chain is Small ribosomal subunit protein uS3 (222 aa).

The 69-residue stretch at 38 to 106 (IRKFISEKLA…NVHINIVEIK (69 aa)) folds into the KH type-2 domain.

Belongs to the universal ribosomal protein uS3 family. Part of the 30S ribosomal subunit. Forms a tight complex with proteins S10 and S14.

Functionally, binds the lower part of the 30S subunit head. Binds mRNA in the 70S ribosome, positioning it for translation. The protein is Small ribosomal subunit protein uS3 of Lactobacillus johnsonii (strain CNCM I-12250 / La1 / NCC 533).